The chain runs to 1776 residues: 6-methylsalicylic acid synthase (1776 aa).

Positions 1–18 (MHSVSPSTYPSGGTSPAP) are enriched in low complexity. The interval 1-26 (MHSVSPSTYPSGGTSPAPADTPGTEY) is disordered. The region spanning 32–457 (SNDVAVVGMA…GTVSHAVIEE (426 aa)) is the Ketosynthase family 3 (KS3) domain. Active-site for beta-ketoacyl synthase activity residues include Cys204, His339, and His379. Residues 567-880 (VWVFSGHGAQ…IAQLHCRGAE (314 aa)) form a malonyl-CoA:ACP transacylase (MAT) domain region. Residues 925–1044 (HTLLGQRIPV…AYWDRKVLGS (120 aa)) are N-terminal hotdog fold. The interval 925–1196 (HTLLGQRIPV…FTAMRFSEIE (272 aa)) is dehydratase (DH) domain. Positions 925 to 1201 (HTLLGQRIPV…FSEIEGTPGV (277 aa)) constitute a PKS/mFAS DH domain. Catalysis depends on His957, which acts as the Proton acceptor; for dehydratase activity. The C-terminal hotdog fold stretch occupies residues 1058–1201 (TTKLADNFSI…FSEIEGTPGV (144 aa)). Asp1113 (proton donor; for dehydratase activity) is an active-site residue. The product template (PT) domain stretch occupies residues 1205-1657 (MESLVHQIAW…LRSLAIDDGE (453 aa)). One can recognise a Carrier domain in the interval 1700–1774 (AYLDEKIRGC…HLVVWFAEKI (75 aa)). Position 1734 is an O-(pantetheine 4'-phosphoryl)serine (Ser1734).

It is found in the cytoplasm. It localises to the cytosol. The enzyme catalyses 3 malonyl-CoA + acetyl-CoA + NADPH + 3 H(+) = 6-methylsalicylate + 3 CO2 + NADP(+) + 4 CoA + H2O. Its pathway is mycotoxin biosynthesis; patulin biosynthesis. 6-methylsalicylic acid synthase; part of the gene cluster that mediates the biosynthesis of patulin, an acetate-derived tetraketide mycotoxin produced by several fungal species that shows antimicrobial properties against several bacteria. PatK catalyzes the first step of the pathway which is the synthesis of 6-methylsalicylic acid via condensation of 1 acetate and 3 malonate units. The pathway begins with the synthesis of 6-methylsalicylic acid by the polyketide synthase (PKS) patK via condensation of acetate and malonate units. The 6-methylsalicylic acid decarboxylase patG then catalyzes the decarboxylation of 6-methylsalicylic acid to yield m-cresol (also known as 3-methylphenol). These first reactions occur in the cytosol. The intermediate m-cresol is then transported into the endoplasmic reticulum where the cytochrome P450 monooxygenase patH converts it to m-hydroxybenzyl alcohol, which is further converted to gentisyl alcohol by the cytochrome P450 monooxygenase patI. The oxidoreductases patJ and patO further convert gentisyl alcohol to isoepoxydon in the vacuole. PatN catalyzes then the transformation of isoepoxydon into phyllostine. The cluster protein patF is responsible for the conversion from phyllostine to neopatulin whereas the alcohol dehydrogenase patD converts neopatulin to E-ascladiol. The steps between isoepoxydon and E-ascladiol occur in the cytosol, and E-ascladiol is probably secreted to the extracellular space by one of the cluster-specific transporters patC or patM. Finally, the secreted patulin synthase patE catalyzes the conversion of E-ascladiol to patulin. The protein is 6-methylsalicylic acid synthase of Penicillium expansum (Blue mold rot fungus).